Reading from the N-terminus, the 289-residue chain is DNA repair protein rad14 (289 aa).

Positions 116, 119, 137, and 140 each coordinate Zn(2+). A zinc finger spans residues 116-140 (CFECDSIELDTKYFDIFHCRVCHTC).

The protein belongs to the XPA family. As to quaternary structure, interacts with hrq1.

It is found in the nucleus. In terms of biological role, involved in nucleotide excision repair (NER). Functional in repair of ultraviolet radiation induced damages and in mitotic mutation avoidance. Binds damaged DNA. Binds specifically to base-base mismatches or small insertion/deletion loops with unpaired nucleotides. Maintains GT repeat stability. Functions as a part of the short-patch excision repair system. The chain is DNA repair protein rad14 from Schizosaccharomyces pombe (strain 972 / ATCC 24843) (Fission yeast).